The sequence spans 278 residues: Hydroxyethylthiazole kinase (278 aa).

Residue methionine 46 coordinates substrate. Residues arginine 122 and threonine 168 each contribute to the ATP site. A substrate-binding site is contributed by glycine 195.

Belongs to the Thz kinase family. It depends on Mg(2+) as a cofactor.

The enzyme catalyses 5-(2-hydroxyethyl)-4-methylthiazole + ATP = 4-methyl-5-(2-phosphooxyethyl)-thiazole + ADP + H(+). The protein operates within cofactor biosynthesis; thiamine diphosphate biosynthesis; 4-methyl-5-(2-phosphoethyl)-thiazole from 5-(2-hydroxyethyl)-4-methylthiazole: step 1/1. Catalyzes the phosphorylation of the hydroxyl group of 4-methyl-5-beta-hydroxyethylthiazole (THZ). The polypeptide is Hydroxyethylthiazole kinase (Chloroflexus aggregans (strain MD-66 / DSM 9485)).